The sequence spans 449 residues: UDP-N-acetylmuramoylalanine--D-glutamate ligase (449 aa).

118-124 (GTNGKTT) is an ATP binding site.

Belongs to the MurCDEF family.

It is found in the cytoplasm. The enzyme catalyses UDP-N-acetyl-alpha-D-muramoyl-L-alanine + D-glutamate + ATP = UDP-N-acetyl-alpha-D-muramoyl-L-alanyl-D-glutamate + ADP + phosphate + H(+). It participates in cell wall biogenesis; peptidoglycan biosynthesis. In terms of biological role, cell wall formation. Catalyzes the addition of glutamate to the nucleotide precursor UDP-N-acetylmuramoyl-L-alanine (UMA). The sequence is that of UDP-N-acetylmuramoylalanine--D-glutamate ligase from Staphylococcus aureus (strain Mu3 / ATCC 700698).